The sequence spans 198 residues: Transcriptional regulator GfcR (198 aa).

It belongs to the purine/pyrimidine phosphoribosyltransferase family. GfcR subfamily.

The sequence is that of Transcriptional regulator GfcR from Methanocorpusculum labreanum (strain ATCC 43576 / DSM 4855 / Z).